The sequence spans 206 residues: Outer-membrane lipoprotein carrier protein (206 aa).

An N-terminal signal peptide occupies residues Met1 to Ala23.

This sequence belongs to the LolA family. As to quaternary structure, monomer.

The protein localises to the periplasm. Functionally, participates in the translocation of lipoproteins from the inner membrane to the outer membrane. Only forms a complex with a lipoprotein if the residue after the N-terminal Cys is not an aspartate (The Asp acts as a targeting signal to indicate that the lipoprotein should stay in the inner membrane). The polypeptide is Outer-membrane lipoprotein carrier protein (Chromobacterium violaceum (strain ATCC 12472 / DSM 30191 / JCM 1249 / CCUG 213 / NBRC 12614 / NCIMB 9131 / NCTC 9757 / MK)).